The primary structure comprises 235 residues: Elongation factor Tu, chloroplastic (235 aa).

One can recognise a tr-type G domain in the interval 1–125 (KNMITGAAQM…KVDSYIPTPQ (125 aa)). 47-50 (NKED) serves as a coordination point for GTP.

It belongs to the TRAFAC class translation factor GTPase superfamily. Classic translation factor GTPase family. EF-Tu/EF-1A subfamily.

The protein localises to the plastid. It localises to the chloroplast. It carries out the reaction GTP + H2O = GDP + phosphate + H(+). In terms of biological role, GTP hydrolase that promotes the GTP-dependent binding of aminoacyl-tRNA to the A-site of ribosomes during protein biosynthesis. The protein is Elongation factor Tu, chloroplastic (tufA) of Gonium pectorale (Green alga).